Consider the following 554-residue polypeptide: Glucose-6-phosphate isomerase (554 aa).

The Proton donor role is filled by Glu-359. Catalysis depends on residues His-390 and Lys-518.

Belongs to the GPI family.

It localises to the cytoplasm. It carries out the reaction alpha-D-glucose 6-phosphate = beta-D-fructose 6-phosphate. The protein operates within carbohydrate biosynthesis; gluconeogenesis. Its pathway is carbohydrate degradation; glycolysis; D-glyceraldehyde 3-phosphate and glycerone phosphate from D-glucose: step 2/4. Catalyzes the reversible isomerization of glucose-6-phosphate to fructose-6-phosphate. This chain is Glucose-6-phosphate isomerase, found in Ectopseudomonas mendocina (strain ymp) (Pseudomonas mendocina).